Consider the following 271-residue polypeptide: Interleukin-1 alpha (271 aa).

Positions M1–R112 are excised as a propeptide. K82 carries the N6-acetyllysine modification. Residues K82–L86 are nuclear localization signal (NLS). S87 is subject to Phosphoserine. N-linked (GlcNAc...) asparagine glycans are attached at residues N102, N121, N137, and N141.

The protein belongs to the IL-1 family. As to quaternary structure, monomer. Interacts with TMED10; the interaction mediates the translocation from the cytoplasm into the ERGIC (endoplasmic reticulum-Golgi intermediate compartment) and thereby secretion. Interacts with IL1R1. Interacts with S100A13; this interaction is the first step in the export of IL1A, followed by direct translocation of this complex across the plasma membrane. Acetylated within its nuclear localization sequence, which impacts subcellular localization. Post-translationally, proteolytic processed by CAPN1 in a calcium-dependent manner. Cleavage from 31 kDa precursor to 18 kDa biologically active molecules. In terms of processing, phosphorylated. Phosphorylation greatly enhances susceptibility to digestion and promotes the conversion of pre-IL1A alpha to the biologically active IL1A.

The protein resides in the nucleus. Its subcellular location is the cytoplasm. It is found in the secreted. Cytokine constitutively present intracellularly in nearly all resting non-hematopoietic cells that plays an important role in inflammation and bridges the innate and adaptive immune systems. After binding to its receptor IL1R1 together with its accessory protein IL1RAP, forms the high affinity interleukin-1 receptor complex. Signaling involves the recruitment of adapter molecules such as MYD88, IRAK1 or IRAK4. In turn, mediates the activation of NF-kappa-B and the three MAPK pathways p38, p42/p44 and JNK pathways. Within the cell, acts as an alarmin and cell death results in its liberation in the extracellular space after disruption of the cell membrane to induce inflammation and alert the host to injury or damage. In addition to its role as a danger signal, which occurs when the cytokine is passively released by cell necrosis, directly senses DNA damage and acts as signal for genotoxic stress without loss of cell integrity. This Macaca fascicularis (Crab-eating macaque) protein is Interleukin-1 alpha (IL1A).